Here is a 335-residue protein sequence, read N- to C-terminus: Nucleoid-associated protein CKO_00588 (335 aa).

Belongs to the YejK family.

The protein localises to the cytoplasm. It is found in the nucleoid. The sequence is that of Nucleoid-associated protein CKO_00588 from Citrobacter koseri (strain ATCC BAA-895 / CDC 4225-83 / SGSC4696).